The primary structure comprises 214 residues: Tungstate uptake system ATP-binding protein TupC (214 aa).

The ABC transporter domain occupies Ile3 to Phe214. An ATP-binding site is contributed by Gly35–Thr42.

The protein belongs to the ABC transporter superfamily. As to quaternary structure, the complex is composed of two ATP-binding proteins (TupC), two transmembrane proteins (TupB) and a solute-binding protein (TupA).

The catalysed reaction is tungstate(in) + ATP + H2O = tungstate(out) + ADP + phosphate + H(+). In terms of biological role, part of an ABC transporter complex involved in tungstate uptake. Probably responsible for energy coupling to the transport system. The sequence is that of Tungstate uptake system ATP-binding protein TupC from Peptoclostridium acidaminophilum (Eubacterium acidaminophilum).